Consider the following 211-residue polypeptide: Ribonuclease HII (211 aa).

One can recognise an RNase H type-2 domain in the interval 2-211; the sequence is MLILGVDEAG…TAQRLKASSV (210 aa). The a divalent metal cation site is built by aspartate 8, glutamate 9, and aspartate 106.

This sequence belongs to the RNase HII family. The cofactor is Mn(2+). Requires Mg(2+) as cofactor.

It is found in the cytoplasm. It catalyses the reaction Endonucleolytic cleavage to 5'-phosphomonoester.. Its function is as follows. Endonuclease that specifically degrades the RNA of RNA-DNA hybrids. This Methanothrix thermoacetophila (strain DSM 6194 / JCM 14653 / NBRC 101360 / PT) (Methanosaeta thermophila) protein is Ribonuclease HII.